Consider the following 303-residue polypeptide: 1-acyl-sn-glycerol-3-phosphate acyltransferase (303 aa).

The HXXXXD motif signature appears at 82–87; sequence HQSTLD. Residues 278-303 form a disordered region; it reads NEPVPSVSISNDVNTHNEGSSVKKMH. A compositionally biased stretch (polar residues) spans 284-297; that stretch reads VSISNDVNTHNEGS.

Belongs to the 1-acyl-sn-glycerol-3-phosphate acyltransferase family.

It localises to the lipid droplet. The catalysed reaction is a 1-acyl-sn-glycero-3-phosphate + an acyl-CoA = a 1,2-diacyl-sn-glycero-3-phosphate + CoA. The enzyme catalyses a 1-acyl-sn-glycero-3-phosphocholine + an acyl-CoA = a 1,2-diacyl-sn-glycero-3-phosphocholine + CoA. It carries out the reaction a 1-acyl-sn-glycero-3-phosphoethanolamine + an acyl-CoA = a 1,2-diacyl-sn-glycero-3-phosphoethanolamine + CoA. It catalyses the reaction 1-hexadecanoyl-sn-glycero-3-phosphate + (9Z)-octadecenoyl-CoA = 1-hexadecanoyl-2-(9Z-octadecenoyl)-sn-glycero-3-phosphate + CoA. The catalysed reaction is 1-octadecanoyl-sn-glycero-3-phosphate + (9Z)-octadecenoyl-CoA = 1-octadecanoyl-2-(9Z-octadecenoyl)-sn-glycero-3-phosphate + CoA. The enzyme catalyses 1-(9Z-octadecenoyl)-sn-glycero-3-phospho-L-serine + (9Z)-octadecenoyl-CoA = 1,2-di-(9Z)-octadecenoyl-sn-glycero-3-phospho-L-serine + CoA. It carries out the reaction a 1-acyl-sn-glycero-3-phospho-(1D-myo-inositol) + (9Z)-octadecenoyl-CoA = a 1-acyl-2-(9Z-octadecenoyl)-sn-glycero-3-phospho-(1D-myo-inositol) + CoA. It catalyses the reaction 1-heptadecanoyl-sn-glycero-3-phosphate + (9Z)-octadecenoyl-CoA = 1-heptadecanoyl-2-(9Z)-octadecenoyl-sn-glycero-3-phosphate + CoA. The catalysed reaction is 1-heptadecanoyl-sn-glycero-3-phosphate + dodecanoyl-CoA = 1-heptadecanoyl-2-dodecanoyl-sn-glycero-3-phosphate + CoA. The enzyme catalyses 1-heptadecanoyl-sn-glycero-3-phosphate + tetradecanoyl-CoA = 1-heptadecanoyl-2-tetradecanoyl-sn-glycero-3-phosphate + CoA. The protein operates within phospholipid metabolism; CDP-diacylglycerol biosynthesis; CDP-diacylglycerol from sn-glycerol 3-phosphate: step 2/3. Acyltransferase that catalyzes the sn-2-specific, acyl-CoA-dependent acylation of lysophosphatidic acid (LPA) to phosphatidic acid (PA) in lipid particles. Together with ALE1, plays a central role in PA biosynthesis. PA is the intermediate, from which all glycerophospholipids are synthesized. Can also acylate lysophosphoinositol (LPI) and lysophosphoserine (LPS). The fatty acyl substrates include 18:1-acyl-CoA, 14:0-acyl-CoA, 12:0-acyl-CoA and 10:0-acyl-CoA. The sequence is that of 1-acyl-sn-glycerol-3-phosphate acyltransferase from Saccharomyces cerevisiae (strain ATCC 204508 / S288c) (Baker's yeast).